We begin with the raw amino-acid sequence, 369 residues long: Histidinol-phosphate aminotransferase 2 (369 aa).

N6-(pyridoxal phosphate)lysine is present on K229.

Belongs to the class-II pyridoxal-phosphate-dependent aminotransferase family. Histidinol-phosphate aminotransferase subfamily. In terms of assembly, homodimer. Pyridoxal 5'-phosphate is required as a cofactor.

The catalysed reaction is L-histidinol phosphate + 2-oxoglutarate = 3-(imidazol-4-yl)-2-oxopropyl phosphate + L-glutamate. It participates in amino-acid biosynthesis; L-histidine biosynthesis; L-histidine from 5-phospho-alpha-D-ribose 1-diphosphate: step 7/9. In Pseudomonas aeruginosa (strain ATCC 15692 / DSM 22644 / CIP 104116 / JCM 14847 / LMG 12228 / 1C / PRS 101 / PAO1), this protein is Histidinol-phosphate aminotransferase 2 (hisC2).